Here is a 199-residue protein sequence, read N- to C-terminus: Probable thymidylate kinase (199 aa).

ATP is bound at residue 9–16 (GIDGCGKT).

It belongs to the thymidylate kinase family.

The catalysed reaction is dTMP + ATP = dTDP + ADP. The chain is Probable thymidylate kinase from Methanococcus maripaludis (strain C6 / ATCC BAA-1332).